The following is a 536-amino-acid chain: Inactive phospholipase D5 (536 aa).

The helical transmembrane segment at 69 to 89 (IVIFALVCCFAILVALIFSAV) threads the bilayer. An N-linked (GlcNAc...) asparagine glycan is attached at asparagine 121. The 28-residue stretch at 215-242 (NKGRLQSSFWIVDKQHVYIGSAGLDWQS) folds into the PLD phosphodiesterase 1 domain. Asparagine 302 is a glycosylation site (N-linked (GlcNAc...) asparagine). A PLD phosphodiesterase 2 domain is found at 434 to 460 (FPRLNRNKYMVTDGAAYIGNFDWVGND).

The protein belongs to the phospholipase D family.

The protein localises to the membrane. The polypeptide is Inactive phospholipase D5 (PLD5) (Homo sapiens (Human)).